The following is a 307-amino-acid chain: Nitrogenase iron protein 2 (307 aa).

Residue 13 to 20 coordinates ATP; the sequence is GKGGIGKS. Cys101 contacts [4Fe-4S] cluster. Arg104 carries the ADP-ribosylarginine; by dinitrogenase reductase ADP-ribosyltransferase modification. Cys135 serves as a coordination point for [4Fe-4S] cluster. The segment at 285–307 is disordered; that stretch reads QLTETDKAAKESEKKQEDAEGEA.

The protein belongs to the NifH/BchL/ChlL family. As to quaternary structure, homodimer. [4Fe-4S] cluster is required as a cofactor. Post-translationally, the reversible ADP-ribosylation of Arg-104 inactivates the nitrogenase reductase and regulates nitrogenase activity.

The catalysed reaction is N2 + 8 reduced [2Fe-2S]-[ferredoxin] + 16 ATP + 16 H2O = H2 + 8 oxidized [2Fe-2S]-[ferredoxin] + 2 NH4(+) + 16 ADP + 16 phosphate + 6 H(+). The key enzymatic reactions in nitrogen fixation are catalyzed by the nitrogenase complex, which has 2 components: the iron protein and the molybdenum-iron protein. In Mastigocladus laminosus (Fischerella sp.), this protein is Nitrogenase iron protein 2 (nifH2).